Here is a 303-residue protein sequence, read N- to C-terminus: Glycine--tRNA ligase alpha subunit (303 aa).

Belongs to the class-II aminoacyl-tRNA synthetase family. Tetramer of two alpha and two beta subunits.

It localises to the cytoplasm. The catalysed reaction is tRNA(Gly) + glycine + ATP = glycyl-tRNA(Gly) + AMP + diphosphate. The polypeptide is Glycine--tRNA ligase alpha subunit (Klebsiella pneumoniae (strain 342)).